The following is a 219-amino-acid chain: Cytidylate kinase (219 aa).

9 to 17 is an ATP binding site; sequence GPAGSGKTT.

This sequence belongs to the cytidylate kinase family. Type 1 subfamily.

The protein resides in the cytoplasm. The enzyme catalyses CMP + ATP = CDP + ADP. The catalysed reaction is dCMP + ATP = dCDP + ADP. This is Cytidylate kinase from Fervidobacterium nodosum (strain ATCC 35602 / DSM 5306 / Rt17-B1).